Here is a 102-residue protein sequence, read N- to C-terminus: Small ribosomal subunit protein uS10 (102 aa).

The interval 34-58 is disordered; sequence VSGPVPLPTKTLEVPSRKSPDGEGT.

Belongs to the universal ribosomal protein uS10 family. In terms of assembly, part of the 30S ribosomal subunit.

Its function is as follows. Involved in the binding of tRNA to the ribosomes. In Halobacterium salinarum (strain ATCC 29341 / DSM 671 / R1), this protein is Small ribosomal subunit protein uS10.